The sequence spans 204 residues: 3-isopropylmalate dehydratase small subunit (204 aa).

This sequence belongs to the LeuD family. LeuD type 1 subfamily. Heterodimer of LeuC and LeuD.

It catalyses the reaction (2R,3S)-3-isopropylmalate = (2S)-2-isopropylmalate. It functions in the pathway amino-acid biosynthesis; L-leucine biosynthesis; L-leucine from 3-methyl-2-oxobutanoate: step 2/4. Its function is as follows. Catalyzes the isomerization between 2-isopropylmalate and 3-isopropylmalate, via the formation of 2-isopropylmaleate. This Ruthia magnifica subsp. Calyptogena magnifica protein is 3-isopropylmalate dehydratase small subunit.